Here is a 221-residue protein sequence, read N- to C-terminus: UPF0758 protein Ent638_0101 (221 aa).

The MPN domain occupies Pro-99–Ile-221. Residues His-170, His-172, and Asp-183 each contribute to the Zn(2+) site. Positions His-170–Asp-183 match the JAMM motif motif.

This sequence belongs to the UPF0758 family. YicR subfamily.

This is UPF0758 protein Ent638_0101 from Enterobacter sp. (strain 638).